The following is a 250-amino-acid chain: MKITPVKALTDNYIWMIQHGNHAVCVDPSEPSPVLEFLVRNRLMLAQTWVTHPHPDHEGGAAALWRGYMESPVYGESDIEAATHTVTAGTRFTFGNGQVTVWATPGHTDRHTSYLLETSDGIHVFCGDTLFSAGCGRVFTGTVEQLYDNFQRFNQLPEGTLFYPAHEYTAANLRFAAHIEPDNADIQTALKAAEHTPTLPVTLAHERRVNPFLRTEIPAVRQRAEALVGKTLNSGLEVFAALRELKNAYR.

Residues histidine 52, histidine 54, aspartate 56, histidine 57, histidine 107, aspartate 128, and histidine 166 each contribute to the Zn(2+) site.

This sequence belongs to the metallo-beta-lactamase superfamily. Glyoxalase II family. Monomer. It depends on Zn(2+) as a cofactor.

It carries out the reaction an S-(2-hydroxyacyl)glutathione + H2O = a 2-hydroxy carboxylate + glutathione + H(+). It functions in the pathway secondary metabolite metabolism; methylglyoxal degradation; (R)-lactate from methylglyoxal: step 2/2. Functionally, thiolesterase that catalyzes the hydrolysis of S-D-lactoyl-glutathione to form glutathione and D-lactic acid. This Neisseria gonorrhoeae (strain ATCC 700825 / FA 1090) protein is Hydroxyacylglutathione hydrolase.